Consider the following 284-residue polypeptide: Putative L-ribulose-5-phosphate 3-epimerase UlaE (284 aa).

It belongs to the L-ribulose-5-phosphate 3-epimerase family.

It catalyses the reaction L-ribulose 5-phosphate = L-xylulose 5-phosphate. Its pathway is cofactor degradation; L-ascorbate degradation; D-xylulose 5-phosphate from L-ascorbate: step 3/4. In terms of biological role, catalyzes the isomerization of L-xylulose-5-phosphate to L-ribulose-5-phosphate. Is involved in the anaerobic L-ascorbate utilization. The protein is Putative L-ribulose-5-phosphate 3-epimerase UlaE of Shigella dysenteriae serotype 1 (strain Sd197).